A 236-amino-acid chain; its full sequence is 3-deoxy-D-manno-octulosonic acid kinase (236 aa).

The active site involves D166.

Belongs to the protein kinase superfamily. KdkA/RfaP family.

Its subcellular location is the cell inner membrane. It catalyses the reaction an alpha-Kdo-(2-&gt;6)-lipid IVA + ATP = a 4-O-phospho-alpha-Kdo-(2-&gt;6)-lipid IVA + ADP + H(+). The protein operates within bacterial outer membrane biogenesis; LPS core biosynthesis. In terms of biological role, catalyzes the ATP-dependent phosphorylation of the 3-deoxy-D-manno-octulosonic acid (Kdo) residue in Kdo-lipid IV(A) at the 4-OH position. This Photobacterium profundum (strain SS9) protein is 3-deoxy-D-manno-octulosonic acid kinase.